Consider the following 991-residue polypeptide: Nonsense-mediated mRNA decay factor SMG8 (991 aa).

3 disordered regions span residues 18 to 41, 100 to 129, and 278 to 299; these read LGSE…PEPP, GEAG…NRAE, and EPPR…PKRR. A Phosphoserine modification is found at S115. The span at 278–289 shows a compositional bias: basic and acidic residues; the sequence is EPPRSQDTAHPD. A compositionally biased stretch (basic residues) spans 290–299; sequence KPKKHSPKRR. 2 positions are modified to phosphoserine: S469 and S668. Positions 653–738 are disordered; it reads FEPSTPDPAP…KSEKRPNLVD (86 aa). Residues 675–684 are compositionally biased toward basic and acidic residues; that stretch reads DAEKLKEKEP. Residues 685-706 show a composition bias toward polar residues; it reads QTQGESTSLSLALSLGQSTDSL. A compositionally biased stretch (basic and acidic residues) spans 720–736; the sequence is PEVHGQGEGKSEKRPNL. S742 and S895 each carry phosphoserine. Residue R898 is modified to Omega-N-methylarginine.

This sequence belongs to the SMG8 family. In terms of assembly, component of the SMG1C complex composed of SMG1, SMG8 and SMG9; the recruitment of SMG8 to SMG1 N-terminus induces a large conformational change in the SMG1 C-terminal head domain containing the catalytic domain. Forms heterodimers with SMG9; this assembly form may represent a SMG1C intermediate form. Post-translationally, phosphorylated by SMG1.

In terms of biological role, involved in nonsense-mediated decay (NMD) of mRNAs containing premature stop codons. Is recruited by release factors to stalled ribosomes together with SMG1 and SMG9 (forming the SMG1C protein kinase complex) and, in the SMG1C complex, is required to mediate the recruitment of SMG1 to the ribosome:SURF complex and to suppress SMG1 kinase activity until the ribosome:SURF complex locates the exon junction complex (EJC). Acts as a regulator of kinase activity. The sequence is that of Nonsense-mediated mRNA decay factor SMG8 (Smg8) from Mus musculus (Mouse).